The sequence spans 371 residues: Chaperone protein DnaJ (371 aa).

A J domain is found at 5–69 (EFYDRLGVSK…QKRAAYDQYG (65 aa)). The CR-type zinc finger occupies 127 to 209 (GAEKEVSYNR…CHGTGHEKKT (83 aa)). Zn(2+)-binding residues include cysteine 140, cysteine 143, cysteine 157, cysteine 160, cysteine 183, cysteine 186, cysteine 197, and cysteine 200. CXXCXGXG motif repeat units follow at residues 140–147 (CHTCSGSG), 157–164 (CQKCHGSG), 183–190 (CDVCQGSG), and 197–204 (CPTCHGTG).

The protein belongs to the DnaJ family. In terms of assembly, homodimer. Requires Zn(2+) as cofactor.

It is found in the cytoplasm. Its function is as follows. Participates actively in the response to hyperosmotic and heat shock by preventing the aggregation of stress-denatured proteins and by disaggregating proteins, also in an autonomous, DnaK-independent fashion. Unfolded proteins bind initially to DnaJ; upon interaction with the DnaJ-bound protein, DnaK hydrolyzes its bound ATP, resulting in the formation of a stable complex. GrpE releases ADP from DnaK; ATP binding to DnaK triggers the release of the substrate protein, thus completing the reaction cycle. Several rounds of ATP-dependent interactions between DnaJ, DnaK and GrpE are required for fully efficient folding. Also involved, together with DnaK and GrpE, in the DNA replication of plasmids through activation of initiation proteins. This Streptococcus agalactiae serotype Ia (strain ATCC 27591 / A909 / CDC SS700) protein is Chaperone protein DnaJ.